Here is a 222-residue protein sequence, read N- to C-terminus: ATP-dependent dethiobiotin synthetase BioD (222 aa).

Aspartate 12–valine 17 is an ATP binding site. A Mg(2+)-binding site is contributed by threonine 16. Residue lysine 37 is part of the active site. Serine 41 serves as a coordination point for substrate. ATP is bound by residues aspartate 54, glutamate 116–glycine 119, valine 176–glutamine 177, proline 206–leucine 208, and glutamate 213. The Mg(2+) site is built by aspartate 54 and glutamate 116.

It belongs to the dethiobiotin synthetase family. Homodimer. The cofactor is Mg(2+).

It localises to the cytoplasm. The enzyme catalyses (7R,8S)-7,8-diammoniononanoate + CO2 + ATP = (4R,5S)-dethiobiotin + ADP + phosphate + 3 H(+). Its pathway is cofactor biosynthesis; biotin biosynthesis; biotin from 7,8-diaminononanoate: step 1/2. Functionally, catalyzes a mechanistically unusual reaction, the ATP-dependent insertion of CO2 between the N7 and N8 nitrogen atoms of 7,8-diaminopelargonic acid (DAPA, also called 7,8-diammoniononanoate) to form a ureido ring. The polypeptide is ATP-dependent dethiobiotin synthetase BioD (Idiomarina loihiensis (strain ATCC BAA-735 / DSM 15497 / L2-TR)).